The sequence spans 495 residues: Bifunctional protein GlmU (495 aa).

Positions 1-241 (MTFPGDTAVL…SALVAGVNNR (241 aa)) are pyrophosphorylase. UDP-N-acetyl-alpha-D-glucosamine is bound by residues 12-15 (LAAG), lysine 26, glutamine 83, 88-89 (GT), 112-114 (SGD), glycine 151, glutamate 166, asparagine 181, and asparagine 239. Aspartate 114 contributes to the Mg(2+) binding site. Asparagine 239 serves as a coordination point for Mg(2+). Positions 242 to 262 (VQLAELASELNRRVVAAHQLA) are linker. Residues 263 to 495 (GVTVVDPATT…TQPPDADQTP (233 aa)) are N-acetyltransferase. Residues arginine 344 and lysine 362 each contribute to the UDP-N-acetyl-alpha-D-glucosamine site. The active-site Proton acceptor is the histidine 374. Residues tyrosine 377 and asparagine 388 each contribute to the UDP-N-acetyl-alpha-D-glucosamine site. Residues alanine 391, 397–398 (NY), serine 416, and alanine 434 contribute to the acetyl-CoA site. The segment at 457-495 (IENWVQRKRPGSPAAQASKRASEMACQQPTQPPDADQTP) is disordered. Low complexity predominate over residues 483 to 495 (QQPTQPPDADQTP).

This sequence in the N-terminal section; belongs to the N-acetylglucosamine-1-phosphate uridyltransferase family. The protein in the C-terminal section; belongs to the transferase hexapeptide repeat family. Homotrimer. Mg(2+) is required as a cofactor.

The protein localises to the cytoplasm. It catalyses the reaction alpha-D-glucosamine 1-phosphate + acetyl-CoA = N-acetyl-alpha-D-glucosamine 1-phosphate + CoA + H(+). It carries out the reaction N-acetyl-alpha-D-glucosamine 1-phosphate + UTP + H(+) = UDP-N-acetyl-alpha-D-glucosamine + diphosphate. Its pathway is nucleotide-sugar biosynthesis; UDP-N-acetyl-alpha-D-glucosamine biosynthesis; N-acetyl-alpha-D-glucosamine 1-phosphate from alpha-D-glucosamine 6-phosphate (route II): step 2/2. The protein operates within nucleotide-sugar biosynthesis; UDP-N-acetyl-alpha-D-glucosamine biosynthesis; UDP-N-acetyl-alpha-D-glucosamine from N-acetyl-alpha-D-glucosamine 1-phosphate: step 1/1. It functions in the pathway bacterial outer membrane biogenesis; LPS lipid A biosynthesis. Functionally, catalyzes the last two sequential reactions in the de novo biosynthetic pathway for UDP-N-acetylglucosamine (UDP-GlcNAc). The C-terminal domain catalyzes the transfer of acetyl group from acetyl coenzyme A to glucosamine-1-phosphate (GlcN-1-P) to produce N-acetylglucosamine-1-phosphate (GlcNAc-1-P), which is converted into UDP-GlcNAc by the transfer of uridine 5-monophosphate (from uridine 5-triphosphate), a reaction catalyzed by the N-terminal domain. In Mycobacterium tuberculosis (strain ATCC 25177 / H37Ra), this protein is Bifunctional protein GlmU.